The following is a 202-amino-acid chain: Holliday junction branch migration complex subunit RuvA (202 aa).

The tract at residues 1 to 64 is domain I; it reads MIGRLRGSLA…EDAHLLYGFY (64 aa). The domain II stretch occupies residues 65–143; it reads EKRERELFRE…AWEALPGTFT (79 aa). Residues 144–153 are flexible linker; sequence LVSNGPNQAE. Residues 154-202 are domain III; it reads PVASAESDAVSALISLGYKPQEASKAVSAIKEKDLSSADLIRRALKGMG.

It belongs to the RuvA family. As to quaternary structure, homotetramer. Forms an RuvA(8)-RuvB(12)-Holliday junction (HJ) complex. HJ DNA is sandwiched between 2 RuvA tetramers; dsDNA enters through RuvA and exits via RuvB. An RuvB hexamer assembles on each DNA strand where it exits the tetramer. Each RuvB hexamer is contacted by two RuvA subunits (via domain III) on 2 adjacent RuvB subunits; this complex drives branch migration. In the full resolvosome a probable DNA-RuvA(4)-RuvB(12)-RuvC(2) complex forms which resolves the HJ.

It is found in the cytoplasm. Its function is as follows. The RuvA-RuvB-RuvC complex processes Holliday junction (HJ) DNA during genetic recombination and DNA repair, while the RuvA-RuvB complex plays an important role in the rescue of blocked DNA replication forks via replication fork reversal (RFR). RuvA specifically binds to HJ cruciform DNA, conferring on it an open structure. The RuvB hexamer acts as an ATP-dependent pump, pulling dsDNA into and through the RuvAB complex. HJ branch migration allows RuvC to scan DNA until it finds its consensus sequence, where it cleaves and resolves the cruciform DNA. The polypeptide is Holliday junction branch migration complex subunit RuvA (Pseudomonas syringae pv. syringae (strain B728a)).